We begin with the raw amino-acid sequence, 647 residues long: Exoribonuclease 2 (647 aa).

The RNB domain occupies 192-520 (REDLTALSFV…NHRLLKAIIS (329 aa)). Residues 565-647 (ESTFNAEIID…ETRNIVARPI (83 aa)) form the S1 motif domain.

This sequence belongs to the RNR ribonuclease family. RNase II subfamily.

The protein resides in the cytoplasm. The enzyme catalyses Exonucleolytic cleavage in the 3'- to 5'-direction to yield nucleoside 5'-phosphates.. Functionally, involved in mRNA degradation. Hydrolyzes single-stranded polyribonucleotides processively in the 3' to 5' direction. This is Exoribonuclease 2 from Proteus mirabilis (strain HI4320).